Reading from the N-terminus, the 686-residue chain is Putative xyloglucan glycosyltransferase 10 (686 aa).

Helical transmembrane passes span 114–134 (LYAFIRASLLLSVFLLAVELA) and 160–180 (AAYVAPPLQLLADACVVLFLV). Asp267 is an active-site residue. 2 residues coordinate substrate: Asp326 and Asp328. Asp420 is a catalytic residue. 4 helical membrane passes run 498 to 518 (LILPFYSFTLFCIILPMTMFI), 523 to 543 (LPDWVVCYIPALMSFLNILPA), 640 to 656 (ELALSLLLLTAAARSLL), and 661 to 681 (IHFYFLMFQGLSFLLVGLDLI).

The protein belongs to the glycosyltransferase 2 family. Plant cellulose synthase-like C subfamily.

The protein localises to the golgi apparatus membrane. Probable beta-1,4-glucan synthase rather involved in the synthesis of the xyloglucan backbone than cellulose. Seems to work simultaneously with xyloglucan 6-xylosyltransferase. Xyloglucan is a noncellulosic polysaccharides of plant cell wall and consists of a glucan backbone substituted by xylose, galactose and fucose. The polypeptide is Putative xyloglucan glycosyltransferase 10 (CSLC10) (Oryza sativa subsp. indica (Rice)).